Here is a 1493-residue protein sequence, read N- to C-terminus: Myosin-13 (1493 aa).

The Myosin N-terminal SH3-like domain maps to 18–67 (KVGSIVWVQDPEEAWIDGEVVEVNGEDIKVQCTSGKTVVAKGSNTYPKDM). The region spanning 72-741 (SGVDDMTTLA…QMAELDDRRT (670 aa)) is the Myosin motor domain. ATP-binding positions include 166-173 (GESGAGKT) and 219-227 (NNNSSRFGK). 4 actin-binding regions span residues 504-538 (LIEK…YETL), 540-563 (DNKY…AGDV), 598-622 (FPPL…KQQL), and 622-644 (LASL…KPNN). IQ domains follow at residues 744–773 (LGRA…AAIN), 767–796 (LRNA…EAAA), 792–821 (REAA…VTVQ), 813–842 (YIEA…ATTV), 836–865 (KTKA…AAIT), and 859–888 (LKKA…DARD). Positions 889–1057 (TVVLQAAKSM…NFLKESVLTT (169 aa)) form a coiled coil. A disordered region spans residues 1085–1114 (QLSGAEFTTPPRIQESGSDTKSRGSHIDPQ). Residues 1102–1114 (SDTKSRGSHIDPQ) show a composition bias toward basic and acidic residues. The Dilute domain occupies 1161-1444 (DRLVQMIGSA…IASMTGVMTD (284 aa)).

This sequence belongs to the TRAFAC class myosin-kinesin ATPase superfamily. Myosin family. Plant myosin class XI subfamily. Homodimer.

Functionally, myosin heavy chain that is required for the cell cycle-regulated transport of various organelles and proteins for their segregation. Functions by binding with its tail domain to receptor proteins on organelles and exerting force with its N-terminal motor domain against actin filaments, thereby transporting its cargo along polarized actin cables. The protein is Myosin-13 (XI-G) of Arabidopsis thaliana (Mouse-ear cress).